The following is a 214-amino-acid chain: Holliday junction branch migration complex subunit RuvA (214 aa).

The tract at residues 1-67 is domain I; it reads MVGWLKGLIV…ADNWQFFGFK (67 aa). The segment at 68–146 is domain II; it reads STQERDIFRE…AFAGMDPAPS (79 aa). Residues 147–154 are flexible linker; the sequence is LAEGVSSE. The segment at 155–214 is domain III; that stretch reads QMPESGADVEATLSMLGYDDLEVRRAIRAIAEGSDGPPPPGDDQDAWLRGCLQWLSRDSA.

This sequence belongs to the RuvA family. Homotetramer. Forms an RuvA(8)-RuvB(12)-Holliday junction (HJ) complex. HJ DNA is sandwiched between 2 RuvA tetramers; dsDNA enters through RuvA and exits via RuvB. An RuvB hexamer assembles on each DNA strand where it exits the tetramer. Each RuvB hexamer is contacted by two RuvA subunits (via domain III) on 2 adjacent RuvB subunits; this complex drives branch migration. In the full resolvosome a probable DNA-RuvA(4)-RuvB(12)-RuvC(2) complex forms which resolves the HJ.

Its subcellular location is the cytoplasm. In terms of biological role, the RuvA-RuvB-RuvC complex processes Holliday junction (HJ) DNA during genetic recombination and DNA repair, while the RuvA-RuvB complex plays an important role in the rescue of blocked DNA replication forks via replication fork reversal (RFR). RuvA specifically binds to HJ cruciform DNA, conferring on it an open structure. The RuvB hexamer acts as an ATP-dependent pump, pulling dsDNA into and through the RuvAB complex. HJ branch migration allows RuvC to scan DNA until it finds its consensus sequence, where it cleaves and resolves the cruciform DNA. This chain is Holliday junction branch migration complex subunit RuvA, found in Synechococcus sp. (strain CC9605).